A 511-amino-acid chain; its full sequence is Cytochrome P450 monooxygenase prhD (511 aa).

An N-linked (GlcNAc...) asparagine glycan is attached at N7. Residues 10 to 30 (GNGMGLLIPLGLSWLIWTILL) form a helical membrane-spanning segment. Heme is bound at residue C444. Residue N502 is glycosylated (N-linked (GlcNAc...) asparagine).

It belongs to the cytochrome P450 family. Heme serves as cofactor.

It localises to the membrane. The protein operates within secondary metabolite biosynthesis; terpenoid biosynthesis. Cytochrome P450 monooxygenase; part of the gene cluster that mediates the biosynthesis of paraherquonin, a meroterpenoid with a unique, highly congested hexacyclic molecular architecture. The first step of the pathway is the synthesis of 3,5-dimethylorsellinic acid (DMOA) by the polyketide synthase prhL. Synthesis of DMOA is followed by farnesylation by the prenyltransferase prhE, methylesterification by the methyl-transferase prhM, epoxidation of the prenyl chain by the flavin-dependent monooxygenase prhF, and cyclization of the farnesyl moiety by the terpene cyclase prhH, to yield the tetracyclic intermediate, protoaustinoid A. The short chain dehydrogenase prhI then oxidizes the C-3 alcohol group of the terpene cyclase product to transform protoaustinoid A into protoaustinoid B. The FAD-binding monooxygenase prhJ catalyzes the oxidation of protoaustinoid B into preaustinoid A which is further oxidized into preaustinoid A1 by FAD-binding monooxygenase phrK. Finally, prhA leads to berkeleydione via the berkeleyone B intermediate. PrhA is a multifunctional dioxygenase that first desaturates at C5-C6 to form berkeleyone B, followed by rearrangement of the A/B-ring to form the cycloheptadiene moiety in berkeleydione. Berkeleydione serves as the key intermediate for the biosynthesis of paraherquonin as well as many other meroterpenoids. The cytochrome P450 monooxygenases prhB, prhD, and prhN, as well as the isomerase prhC, are probably involved in the late stage of paraherquonin biosynthesis, after the production of berkeleydione. Especially prhC might be a multifunctional enzyme that catalyzes the D-ring expansion via intramolecular methoxy rearrangement, as well as the hydrolysis of the expanded D-ring. This is Cytochrome P450 monooxygenase prhD from Penicillium brasilianum.